Reading from the N-terminus, the 173-residue chain is Alpha-crystallin A chain (173 aa).

Methionine 1 is subject to N-acetylmethionine. A required for complex formation with BFSP1 and BFSP2 region spans residues 1 to 63 (MDVTIQHPWF…RTVLDSGVSE (63 aa)). Glutamine 6 is subject to Deamidated glutamine; partial. Phosphoserine is present on serine 45. The residue at position 50 (glutamine 50) is a Deamidated glutamine; partial. One can recognise a sHSP domain in the interval 52 to 162 (LFRTVLDSGV…GHSERAIPVS (111 aa)). At lysine 70 the chain carries N6-acetyllysine. Glutamine 90 carries the post-translational modification Deamidated glutamine; partial. The residue at position 99 (lysine 99) is an N6-acetyllysine. Histidine 100 lines the Zn(2+) pocket. Residue asparagine 101 is modified to Deamidated asparagine; partial. Glutamate 102 and histidine 107 together coordinate Zn(2+). Serine 122 carries the post-translational modification Phosphoserine. Asparagine 123 is modified (deamidated asparagine; partial). Positions 144-173 (PKVQSGLDAGHSERAIPVSREEKPSSAPSS) are disordered. Glutamine 147 carries the post-translational modification Deamidated glutamine; partial. Residues 153 to 167 (GHSERAIPVSREEKP) are compositionally biased toward basic and acidic residues. Residue histidine 154 participates in Zn(2+) binding. The O-linked (GlcNAc) serine glycan is linked to serine 162.

Belongs to the small heat shock protein (HSP20) family. As to quaternary structure, heteromer composed of three CRYAA and one CRYAB subunits. Inter-subunit bridging via zinc ions enhances stability, which is crucial as there is no protein turn over in the lens. Can also form homodimers and homotetramers (dimers of dimers) which serve as the building blocks of homooligomers. Within homooligomers, the zinc-binding motif is created from residues of 3 different molecules. His-100 and Glu-102 from one molecule are ligands of the zinc ion, and His-107 and His-154 residues from additional molecules complete the site with tetrahedral coordination geometry. Part of a complex required for lens intermediate filament formation composed of BFSP1, BFSP2 and CRYAA. In terms of processing, acetylation at Lys-70 may increase chaperone activity. Undergoes age-dependent proteolytical cleavage at the C-terminus.

It is found in the cytoplasm. The protein resides in the nucleus. Its function is as follows. Contributes to the transparency and refractive index of the lens. Acts as a chaperone, preventing aggregation of various proteins under a wide range of stress conditions. Required for the correct formation of lens intermediate filaments as part of a complex composed of BFSP1, BFSP2 and CRYAA. This chain is Alpha-crystallin A chain (CRYAA), found in Otolemur crassicaudatus (Brown greater galago).